The following is a 473-amino-acid chain: Phosphatidylserine synthase 1 (473 aa).

Topologically, residues 1–35 (MAACVGSRTLSKDDVNYRLHFRMINEQQVEDITLE) are cytoplasmic. Residues 36–56 (FFYRPHTITLLSFTILSLMAF) traverse the membrane as a helical segment. Residues 57–72 (AFTRDDSVPEENIWRG) are Lumenal-facing. The helical transmembrane segment at 73–93 (ILSVIFFFLIISVLAFPNGPF) threads the bilayer. At 94–102 (TRPHPAIWR) the chain is on the cytoplasmic side. Residues 103–123 (MVFGLSVLYFLFLVFVLFLNF) traverse the membrane as a helical segment. Residues 124 to 186 (EQVKAVMYWL…AMKALLIRSY (63 aa)) lie on the Lumenal side of the membrane. Residues 187-207 (GLCWTISITWELTELFFMHLL) form a helical membrane-spanning segment. Over 208–216 (PNFAECWWD) the chain is Cytoplasmic. A helical membrane pass occupies residues 217 to 237 (QVILDILLCNGGGIWLGMVVC). Topologically, residues 238 to 286 (RFLEMRTYHWASFKDIHTTTGKIKRAVLQFTPASWTYVRWFDPKSSFQR) are lumenal. The helical transmembrane segment at 287 to 307 (VAGIYLFMIIWQLTELNTFFL) threads the bilayer. The Cytoplasmic portion of the chain corresponds to 308–319 (KHIFVFQASHPL). The helical transmembrane segment at 320–342 (SWGRILFIGIITAPTVRQYYAYL) threads the bilayer. Topologically, residues 343-355 (TDTQCKRVGTQCW) are lumenal. A helical membrane pass occupies residues 356–376 (VFGVIAFLEAIVCIKFGQDLF). The Cytoplasmic segment spans residues 377 to 380 (SKTQ). Residues 381-401 (ILYVVFWLLCVAFTTFLCLYG) traverse the membrane as a helical segment. The Lumenal segment spans residues 402-473 (MVWYAEYYGH…SKVTNGIGKK (72 aa)). Positions 420-473 (EDSPYSPDASWLHSKFSKGADNSPPKHPVNSESHSSRRRNRHSRSKVTNGIGKK) are disordered. A compositionally biased stretch (basic residues) spans 455–464 (SRRRNRHSRS).

The protein belongs to the phosphatidyl serine synthase family.

Its subcellular location is the endoplasmic reticulum membrane. The catalysed reaction is a 1,2-diacyl-sn-glycero-3-phosphoethanolamine + L-serine = a 1,2-diacyl-sn-glycero-3-phospho-L-serine + ethanolamine. The enzyme catalyses a 1,2-diacyl-sn-glycero-3-phosphocholine + L-serine = a 1,2-diacyl-sn-glycero-3-phospho-L-serine + choline. It functions in the pathway phospholipid metabolism; phosphatidylserine biosynthesis. Functionally, catalyzes a base-exchange reaction in which the polar head group of phosphatidylethanolamine (PE) or phosphatidylcholine (PC) is replaced by L-serine. Catalyzes mainly the conversion of phosphatidylcholine but also converts, in vitro and to a lesser extent, phosphatidylethanolamine. The chain is Phosphatidylserine synthase 1 (PTDSS1) from Gallus gallus (Chicken).